The following is a 545-amino-acid chain: Glutamyl-tRNA(Gln) amidotransferase subunit B-1, chloroplastic/mitochondrial (545 aa).

Belongs to the GatB/GatE family. GatB subfamily. In terms of assembly, subunit of the heterotrimeric GatCAB amidotransferase (AdT) complex, composed of A, B and C subunits.

It localises to the mitochondrion. The protein resides in the plastid. Its subcellular location is the chloroplast. The catalysed reaction is L-glutamyl-tRNA(Gln) + L-glutamine + ATP + H2O = L-glutaminyl-tRNA(Gln) + L-glutamate + ADP + phosphate + H(+). Its function is as follows. Allows the formation of correctly charged Gln-tRNA(Gln) through the transamidation of misacylated Glu-tRNA(Gln) in chloroplasts and mitochondria. The reaction takes place in the presence of glutamine and ATP through an activated gamma-phospho-Glu-tRNA(Gln). This chain is Glutamyl-tRNA(Gln) amidotransferase subunit B-1, chloroplastic/mitochondrial, found in Micromonas pusilla (strain CCMP1545) (Picoplanktonic green alga).